A 422-amino-acid polypeptide reads, in one-letter code: Probable sucrose-phosphatase 2 (422 aa).

Belongs to the sucrose phosphatase family. As to quaternary structure, homodimer. It depends on Mg(2+) as a cofactor.

It carries out the reaction sucrose 6(F)-phosphate + H2O = sucrose + phosphate. It functions in the pathway glycan biosynthesis; sucrose biosynthesis; sucrose from D-fructose 6-phosphate and UDP-alpha-D-glucose: step 2/2. Functionally, catalyzes the final step of sucrose synthesis. This chain is Probable sucrose-phosphatase 2 (SPP2), found in Arabidopsis thaliana (Mouse-ear cress).